A 269-amino-acid polypeptide reads, in one-letter code: UPF0329 protein ECU04_1660 (269 aa).

A compositionally biased stretch (basic and acidic residues) spans 1 to 12 (MEERERGKEKGS). A disordered region spans residues 1-74 (MEERERGKEK…SPKEKSKGEE (74 aa)). Over residues 13–23 (KGKGRKKRGKK) the composition is skewed to basic residues. Basic and acidic residues predominate over residues 24-36 (GAGEAKEESKEED). Over residues 37–51 (RGEEEEESVEADVPV) the composition is skewed to acidic residues.

The protein belongs to the UPF0329 family.

The polypeptide is UPF0329 protein ECU04_1660 (Encephalitozoon cuniculi (strain GB-M1) (Microsporidian parasite)).